Consider the following 241-residue polypeptide: Adenosylcobinamide-GDP ribazoletransferase (241 aa).

A run of 4 helical transmembrane segments spans residues 34–54, 108–128, 184–206, and 220–240; these read LGLPAVGLVSGLLAGVVAWAF, VGGLAIGSMALLLAVASFGWI, LPFSPVATLTCAVCSAVVAWTCL, and FLGASIWVSRVLSAVCLSSLP.

It belongs to the CobS family. Requires Mg(2+) as cofactor.

Its subcellular location is the cell membrane. It carries out the reaction alpha-ribazole + adenosylcob(III)inamide-GDP = adenosylcob(III)alamin + GMP + H(+). The catalysed reaction is alpha-ribazole 5'-phosphate + adenosylcob(III)inamide-GDP = adenosylcob(III)alamin 5'-phosphate + GMP + H(+). Its pathway is cofactor biosynthesis; adenosylcobalamin biosynthesis; adenosylcobalamin from cob(II)yrinate a,c-diamide: step 7/7. Joins adenosylcobinamide-GDP and alpha-ribazole to generate adenosylcobalamin (Ado-cobalamin). Also synthesizes adenosylcobalamin 5'-phosphate from adenosylcobinamide-GDP and alpha-ribazole 5'-phosphate. This chain is Adenosylcobinamide-GDP ribazoletransferase, found in Methanopyrus kandleri (strain AV19 / DSM 6324 / JCM 9639 / NBRC 100938).